A 74-amino-acid polypeptide reads, in one-letter code: Kappa-scoloptoxin(03)-Ssm1a (74 aa).

An N-terminal signal peptide occupies residues 1-23 (MNSSIAILLVMALIMFSLDKSYS). Cystine bridges form between Cys-32–Cys-59, Cys-42–Cys-58, and Cys-45–Cys-68.

It belongs to the scoloptoxin-03 family. As to expression, expressed by the venom gland.

The protein localises to the secreted. In terms of biological role, this toxin inhibits voltage-gated potassium channel currents in DRG neurons (IC(50)=44.2 nM). In vivo, insects injected with this toxin showed signs of neurotoxicity including twitching, paralysis, and body contraction. This is Kappa-scoloptoxin(03)-Ssm1a from Scolopendra mutilans (Chinese red-headed centipede).